The sequence spans 950 residues: Leucine--tRNA ligase (950 aa).

Positions 41–52 (PYPSGDGLHVGH) match the 'HIGH' region motif. The 'KMSKS' region motif lies at 718 to 722 (KMSKS). Residue Lys721 participates in ATP binding.

This sequence belongs to the class-I aminoacyl-tRNA synthetase family.

It is found in the cytoplasm. It carries out the reaction tRNA(Leu) + L-leucine + ATP = L-leucyl-tRNA(Leu) + AMP + diphosphate. The polypeptide is Leucine--tRNA ligase (Rhodopirellula baltica (strain DSM 10527 / NCIMB 13988 / SH1)).